Here is a 126-residue protein sequence, read N- to C-terminus: Aspartate 1-decarboxylase (126 aa).

Serine 25 serves as the catalytic Schiff-base intermediate with substrate; via pyruvic acid. At serine 25 the chain carries Pyruvic acid (Ser). Threonine 57 serves as a coordination point for substrate. Tyrosine 58 serves as the catalytic Proton donor. Residue 72-74 (GAA) participates in substrate binding.

The protein belongs to the PanD family. As to quaternary structure, heterooctamer of four alpha and four beta subunits. Pyruvate is required as a cofactor. Is synthesized initially as an inactive proenzyme, which is activated by self-cleavage at a specific serine bond to produce a beta-subunit with a hydroxyl group at its C-terminus and an alpha-subunit with a pyruvoyl group at its N-terminus.

It is found in the cytoplasm. The catalysed reaction is L-aspartate + H(+) = beta-alanine + CO2. The protein operates within cofactor biosynthesis; (R)-pantothenate biosynthesis; beta-alanine from L-aspartate: step 1/1. Functionally, catalyzes the pyruvoyl-dependent decarboxylation of aspartate to produce beta-alanine. The protein is Aspartate 1-decarboxylase of Campylobacter jejuni subsp. jejuni serotype O:23/36 (strain 81-176).